A 311-amino-acid chain; its full sequence is Lipid A biosynthesis acyltransferase (311 aa).

Residues 19-39 (WLFWLGVAIWRSILCLPYPIL) traverse the membrane as a helical segment. The short motif at 134–139 (HFLTLE) is the HXXXXD motif element.

Belongs to the LpxL/LpxM/LpxP family.

It is found in the cell inner membrane. The catalysed reaction is an alpha-Kdo-(2-&gt;4)-alpha-Kdo-(2-&gt;6)-lipid IVA + a fatty acyl-[ACP] = an alpha-Kdo-(2-&gt;4)-alpha-Kdo-(2-&gt;6)-(acyl)-lipid IVA + holo-[ACP]. It functions in the pathway glycolipid biosynthesis; KDO(2)-lipid A biosynthesis; KDO(2)-lipid A from CMP-3-deoxy-D-manno-octulosonate and lipid IV(A): step 3/4. It participates in bacterial outer membrane biogenesis; lipopolysaccharide biosynthesis. Functionally, catalyzes the transfer of an acyl chain from an acyl-[acyl-carrier-protein] (ACP) to a Kdo(2)-lipid IV(A) to form a Kdo(2)-(acyl)-lipid IV(A). The polypeptide is Lipid A biosynthesis acyltransferase (Haemophilus influenzae (strain ATCC 51907 / DSM 11121 / KW20 / Rd)).